The chain runs to 263 residues: Tryptophan synthase alpha chain (263 aa).

Active-site proton acceptor residues include glutamate 50 and aspartate 61.

This sequence belongs to the TrpA family. Tetramer of two alpha and two beta chains.

The enzyme catalyses (1S,2R)-1-C-(indol-3-yl)glycerol 3-phosphate + L-serine = D-glyceraldehyde 3-phosphate + L-tryptophan + H2O. Its pathway is amino-acid biosynthesis; L-tryptophan biosynthesis; L-tryptophan from chorismate: step 5/5. Functionally, the alpha subunit is responsible for the aldol cleavage of indoleglycerol phosphate to indole and glyceraldehyde 3-phosphate. The polypeptide is Tryptophan synthase alpha chain (Clostridium acetobutylicum (strain ATCC 824 / DSM 792 / JCM 1419 / IAM 19013 / LMG 5710 / NBRC 13948 / NRRL B-527 / VKM B-1787 / 2291 / W)).